We begin with the raw amino-acid sequence, 164 residues long: UPF0178 protein RPB_3201 (164 aa).

Belongs to the UPF0178 family.

The polypeptide is UPF0178 protein RPB_3201 (Rhodopseudomonas palustris (strain HaA2)).